The chain runs to 142 residues: Small ribosomal subunit protein uS12 (142 aa).

Belongs to the universal ribosomal protein uS12 family. As to quaternary structure, part of the 30S ribosomal subunit.

With S4 and S5 plays an important role in translational accuracy. Located at the interface of the 30S and 50S subunits. The chain is Small ribosomal subunit protein uS12 from Archaeoglobus fulgidus (strain ATCC 49558 / DSM 4304 / JCM 9628 / NBRC 100126 / VC-16).